The chain runs to 229 residues: Enolase-phosphatase E1 (229 aa).

This sequence belongs to the HAD-like hydrolase superfamily. MasA/MtnC family. As to quaternary structure, monomer. It depends on Mg(2+) as a cofactor.

The enzyme catalyses 5-methylsulfanyl-2,3-dioxopentyl phosphate + H2O = 1,2-dihydroxy-5-(methylsulfanyl)pent-1-en-3-one + phosphate. Its pathway is amino-acid biosynthesis; L-methionine biosynthesis via salvage pathway; L-methionine from S-methyl-5-thio-alpha-D-ribose 1-phosphate: step 3/6. It participates in amino-acid biosynthesis; L-methionine biosynthesis via salvage pathway; L-methionine from S-methyl-5-thio-alpha-D-ribose 1-phosphate: step 4/6. In terms of biological role, bifunctional enzyme that catalyzes the enolization of 2,3-diketo-5-methylthiopentyl-1-phosphate (DK-MTP-1-P) into the intermediate 2-hydroxy-3-keto-5-methylthiopentenyl-1-phosphate (HK-MTPenyl-1-P), which is then dephosphorylated to form the acireductone 1,2-dihydroxy-3-keto-5-methylthiopentene (DHK-MTPene). This is Enolase-phosphatase E1 from Serratia proteamaculans (strain 568).